The primary structure comprises 201 residues: MAIILPELPYAYDALEPQFDAETMTLHHDKHHATYVANTNAALEKHPEIGENLEELLADVTKIPEDIRQTLINNGGGHLNHALFWELLSPEKQDVTPDVAQAIDDAFGSFDAFKEQFTAAATGRFGSGWAWLVVNKEGQLEITSTANQDTPISEGKKPILALDVWEHAYYLNYRNVRPNYIKAFFEIVNWKKVSELYQAAK.

Histidine 27, histidine 81, aspartate 163, and histidine 167 together coordinate Mn(2+).

It belongs to the iron/manganese superoxide dismutase family. Homodimer. Mn(2+) serves as cofactor.

Its subcellular location is the secreted. It carries out the reaction 2 superoxide + 2 H(+) = H2O2 + O2. Functionally, destroys superoxide anion radicals which are normally produced within the cells and which are toxic to biological systems. The protein is Superoxide dismutase [Mn] (sodA) of Streptococcus pyogenes serotype M1.